The sequence spans 323 residues: HTH-type transcriptional activator CmpR (323 aa).

Residues 4 to 61 (LTLHQLKVFEAAARHSSFTRAAEELYLTQPTVSIQVKQLTKAVGLPLFEQIGKRLYLT) enclose the HTH lysR-type domain. The segment at residues 21–40 (FTRAAEELYLTQPTVSIQVK) is a DNA-binding region (H-T-H motif). Residues 304–323 (IPESTTTDPELDAPQPVVGV) are disordered.

Belongs to the LysR transcriptional regulatory family.

Its subcellular location is the cytoplasm. Its function is as follows. Activates transcription of the cmpABCD operon under carbon dioxide-limited conditions. The sequence is that of HTH-type transcriptional activator CmpR (cmpR) from Synechococcus elongatus (strain ATCC 33912 / PCC 7942 / FACHB-805) (Anacystis nidulans R2).